Reading from the N-terminus, the 335-residue chain is Dihydroorotate dehydrogenase (quinone) (335 aa).

FMN contacts are provided by residues 58-62 (AGADK) and threonine 82. Lysine 62 is a substrate binding site. 107 to 111 (NRNGF) is a binding site for substrate. Asparagine 135 and asparagine 168 together coordinate FMN. Position 168 (asparagine 168) interacts with substrate. Serine 171 functions as the Nucleophile in the catalytic mechanism. Substrate is bound at residue asparagine 173. Residues lysine 213 and glycine 241 each coordinate FMN. Residue 242–243 (NT) participates in substrate binding. FMN-binding positions include glycine 264, glycine 293, and 314 to 315 (YS).

It belongs to the dihydroorotate dehydrogenase family. Type 2 subfamily. In terms of assembly, monomer. It depends on FMN as a cofactor.

Its subcellular location is the cell membrane. It catalyses the reaction (S)-dihydroorotate + a quinone = orotate + a quinol. Its pathway is pyrimidine metabolism; UMP biosynthesis via de novo pathway; orotate from (S)-dihydroorotate (quinone route): step 1/1. Its function is as follows. Catalyzes the conversion of dihydroorotate to orotate with quinone as electron acceptor. This chain is Dihydroorotate dehydrogenase (quinone), found in Actinobacillus pleuropneumoniae serotype 5b (strain L20).